Here is a 297-residue protein sequence, read N- to C-terminus: MRTKKRTKEMLPIFDQKKVAFIGAGSMAEGMISGIVRANKIPKQNICVTNRSNTERLAELELQYGIKGASPNQICIEDMDVLILAMKPKDAESALSSLKTRIQPHQLILSVLAGITTSFIEQSLLNQQPVVRVMPNTSSMIGASATAIALGKYVSEDLQKLAEALLGCMGEVYTIQENQMDIFTGIAGSGPAYFYYLMEFIEKTGEEAGLDKQLSRSIGAQTLLGAAKMLMETGEQPEVLRDNITSPNGTTAAGLQALKKSGGGEAISQAIKHAAKRSKEISDDIEKTAAPLSGVIK.

The protein belongs to the pyrroline-5-carboxylate reductase family.

It is found in the cytoplasm. It catalyses the reaction L-proline + NADP(+) = (S)-1-pyrroline-5-carboxylate + NADPH + 2 H(+). The catalysed reaction is L-proline + NAD(+) = (S)-1-pyrroline-5-carboxylate + NADH + 2 H(+). It functions in the pathway amino-acid biosynthesis; L-proline biosynthesis; L-proline from L-glutamate 5-semialdehyde: step 1/1. Functionally, catalyzes the reduction of 1-pyrroline-5-carboxylate (PCA) to L-proline. In Bacillus spizizenii (strain ATCC 23059 / NRRL B-14472 / W23) (Bacillus subtilis subsp. spizizenii), this protein is Pyrroline-5-carboxylate reductase 1 (proH).